A 702-amino-acid chain; its full sequence is MA3 DOMAIN-CONTAINING TRANSLATION REGULATORY FACTOR 3 (702 aa).

Residues 1 to 100 (MEGFLTDQQR…PNDPNYDSGE (100 aa)) form a disordered region. Over residues 53 to 65 (VKHRRSHAGRSIR) the composition is skewed to basic residues. A compositionally biased stretch (basic and acidic residues) spans 81-91 (IDTDGDYHIDP). In terms of domain architecture, MI 1 spans 116-237 (DYKKAAASII…PPAFLPRAAK (122 aa)). Residues 267–274 (ERRWGGQT) carry the Nuclear localization signal 1 motif. 3 MI domains span residues 280-401 (EVKK…PSGE), 414-535 (RFKE…EISS), and 577-697 (DAKD…SLTE). The short motif at 615–622 (VKKALVMG) is the Nuclear localization signal 2 element.

This sequence belongs to the PDCD4 family. As to quaternary structure, interacts with EIN2, ETR2 and EIN4. Binds to EIF4A1. The association with ribosomes is modulated by cellular energy status and TOR activity. Mostly expressed in vegetative tissues, such as leaves and stems, and, to a lower extent, in roots and reproductive tissues, such as flower buds and flowers. Expressed in seedlings, roots, cauline leaf tips and flowers.

It is found in the nucleus. It localises to the cytoplasm. Its subcellular location is the cytosol. Involved in target of rapamycin (TOR)-regulated translation control, especially under energy-deficient conditions. Involved in the regulation of the ethylene-mediated signaling pathway. Involved in salt stress responses. Reduced cotyledons size and early flowering. The sequence is that of MA3 DOMAIN-CONTAINING TRANSLATION REGULATORY FACTOR 3 from Arabidopsis thaliana (Mouse-ear cress).